A 213-amino-acid polypeptide reads, in one-letter code: Orotate phosphoribosyltransferase (213 aa).

A 5-phospho-alpha-D-ribose 1-diphosphate-binding site is contributed by lysine 26. 34-35 serves as a coordination point for orotate; sequence FF. 5-phospho-alpha-D-ribose 1-diphosphate contacts are provided by residues 72 to 73, arginine 99, lysine 100, lysine 103, histidine 105, and 124 to 132; these read YK and DDVITAGTA. Threonine 128 and arginine 156 together coordinate orotate.

This sequence belongs to the purine/pyrimidine phosphoribosyltransferase family. PyrE subfamily. In terms of assembly, homodimer. Requires Mg(2+) as cofactor.

The catalysed reaction is orotidine 5'-phosphate + diphosphate = orotate + 5-phospho-alpha-D-ribose 1-diphosphate. The protein operates within pyrimidine metabolism; UMP biosynthesis via de novo pathway; UMP from orotate: step 1/2. Its function is as follows. Catalyzes the transfer of a ribosyl phosphate group from 5-phosphoribose 1-diphosphate to orotate, leading to the formation of orotidine monophosphate (OMP). The sequence is that of Orotate phosphoribosyltransferase from Vibrio parahaemolyticus serotype O3:K6 (strain RIMD 2210633).